We begin with the raw amino-acid sequence, 337 residues long: Diacylglycerol acyltransferase/mycolyltransferase Ag85A (337 aa).

A signal peptide spans 1-42 (MKLVDRFRGAATGTSRRLMVGAVGAALLSGLVGFVGGSATAS). Position 85–86 (85–86 (MR)) interacts with substrate. The tract at residues 101 to 111 (FEWYYQSGISV) is fibronectin-binding. Cysteine 130 and cysteine 135 are oxidised to a cystine. Residues serine 169 and aspartate 197 each coordinate substrate. Serine 169 acts as the Nucleophile in catalysis. Residue glutamate 273 is part of the active site. Substrate-binding positions include 275–278 (FVRT), lysine 282, and 305–307 (HSW). The active site involves histidine 305.

This sequence belongs to the mycobacterial A85 antigen family. In terms of assembly, homodimer.

Its subcellular location is the secreted. The protein resides in the cell wall. It is found in the cytoplasm. The catalysed reaction is an acyl-CoA + a 1,2-diacyl-sn-glycerol = a triacyl-sn-glycerol + CoA. The enzyme catalyses 2 alpha,alpha'-trehalose 6-mycolate = alpha,alpha'-trehalose 6,6'-bismycolate + alpha,alpha-trehalose. In terms of biological role, the antigen 85 proteins (FbpA, FbpB, FbpC) are responsible for the high affinity of mycobacteria for fibronectin, a large adhesive glycoprotein, which facilitates the attachment of M.tuberculosis to murine alveolar macrophages (AMs). They also help to maintain the integrity of the cell wall by catalyzing the transfer of mycolic acids to cell wall arabinogalactan, and through the synthesis of alpha,alpha-trehalose dimycolate (TDM, cord factor). They catalyze the transfer of a mycoloyl residue from one molecule of alpha,alpha-trehalose monomycolate (TMM) to another TMM, leading to the formation of TDM. FbpA mediates triacylglycerol (TAG) formation with long-chain acyl-CoA as the acyl donor and 1,2-dipalmitoyl-sn-glycerol (1,2-dipalmitin) as the acyl acceptor. It has a preference for C26:0-CoA over C18:1-CoA. The chain is Diacylglycerol acyltransferase/mycolyltransferase Ag85A (fbpA) from Mycobacterium ulcerans.